Here is a 343-residue protein sequence, read N- to C-terminus: L-rhamnose-proton symporter (343 aa).

10 consecutive transmembrane segments (helical) span residues 4-24 (AIIL…CFYA), 38-58 (WSIG…YLLL), 68-88 (FSIA…IGNI), 101-121 (MGIG…TPIL), 137-157 (TLLG…AGLL), 175-195 (LILA…MDAA), 207-227 (INSL…GAII), 254-274 (LLIT…LQFF), 289-309 (MSWM…GLLL), and 320-340 (VAVL…VGLG).

It belongs to the L-rhamnose transporter (TC 2.A.7.6) family.

It is found in the cell inner membrane. The catalysed reaction is L-rhamnopyranose(in) + H(+)(in) = L-rhamnopyranose(out) + H(+)(out). Uptake of L-rhamnose across the cytoplasmic membrane with the concomitant transport of protons into the cell (symport system). The protein is L-rhamnose-proton symporter of Yersinia pestis bv. Antiqua (strain Antiqua).